The chain runs to 325 residues: ATP-dependent 6-phosphofructokinase (325 aa).

ATP is bound at residue G12. 22 to 26 serves as a coordination point for ADP; sequence RTIVK. Residues 73-74 and 103-106 each bind ATP; these read RY and GDGS. D104 contacts Mg(2+). Substrate is bound at residue 126–128; sequence TID. D128 functions as the Proton acceptor in the catalytic mechanism. R155 is an ADP binding site. 170–172 contributes to the substrate binding site; that stretch reads MGH. ADP is bound by residues 186 to 188, K213, and 215 to 217; these read GAE and KRS. Substrate-binding positions include E224, R246, and 252 to 255; that span reads HTQR.

The protein belongs to the phosphofructokinase type A (PFKA) family. ATP-dependent PFK group I subfamily. Prokaryotic clade 'B1' sub-subfamily. As to quaternary structure, homotetramer. The cofactor is Mg(2+).

It is found in the cytoplasm. It catalyses the reaction beta-D-fructose 6-phosphate + ATP = beta-D-fructose 1,6-bisphosphate + ADP + H(+). It participates in carbohydrate degradation; glycolysis; D-glyceraldehyde 3-phosphate and glycerone phosphate from D-glucose: step 3/4. With respect to regulation, allosterically activated by ADP and other diphosphonucleosides, and allosterically inhibited by phosphoenolpyruvate. Catalyzes the phosphorylation of D-fructose 6-phosphate to fructose 1,6-bisphosphate by ATP, the first committing step of glycolysis. This Mycoplasma mobile (strain ATCC 43663 / 163K / NCTC 11711) (Mesomycoplasma mobile) protein is ATP-dependent 6-phosphofructokinase.